The sequence spans 308 residues: Zinc transporter ZIP9 (308 aa).

The chain crosses the membrane as a helical span at residues 4-24 (FLSISLLSVAMLVGCYVAGII). Asn29 is a glycosylation site (N-linked (GlcNAc...) asparagine). 5 helical membrane-spanning segments follow: residues 35–55 (LKLV…AVIV), 107–127 (AYIG…DQIG), 147–167 (ITTT…LGAA), 177–197 (LIVF…LVSF), and 211–231 (HLLV…LGLS). A glycan (N-linked (GlcNAc...) asparagine) is linked at Asn242. A run of 2 helical transmembrane segments spans residues 245–265 (GVAM…HVLP) and 287–307 (LEVA…IGHQ).

Belongs to the ZIP transporter (TC 2.A.5) family.

It localises to the golgi apparatus. It is found in the trans-Golgi network membrane. The protein resides in the cell membrane. The protein localises to the cytoplasm. Its subcellular location is the perinuclear region. It localises to the mitochondrion. It is found in the nucleus. It catalyses the reaction Zn(2+)(in) = Zn(2+)(out). Transports zinc ions across cell and organelle membranes into the cytoplasm and regulates intracellular zinc homeostasis. Participates in the zinc ions efflux out of the secretory compartments. Regulates intracellular zinc level, resulting in the enhancement of AKT1 and MAPK3/MAPK1 (Erk1/2) phosphorylation in response to the BCR activation. Also functions as a membrane androgen receptor that mediates, through a G protein, the non-classical androgen signaling pathway, characterized by the activation of MAPK3/MAPK1 (Erk1/2) and transcription factors CREB1 or ATF1. This pathway contributes to CLDN1 and CLDN5 expression and tight junction formation between adjacent Sertoli cells. Mediates androgen-induced vascular endothelial cell proliferation through activation of an inhibitory G protein leading to the AKT1 and MAPK3/MAPK1 (Erk1/2) activation which in turn modulate inhibition (phosphorylation) of GSK3B and CCND1 transcription. Moreover, has dual functions as a membrane-bound androgen receptor and as an androgen-dependent zinc transporter both of which are mediated through an inhibitory G protein (Gi) that mediates both MAP kinase and zinc signaling leading to the androgen-dependent apoptotic process. The polypeptide is Zinc transporter ZIP9 (Mus musculus (Mouse)).